Reading from the N-terminus, the 263-residue chain is MAQATVTVDGVKVTSTRPQSAQISIHIHHKSALEQLLGAMGSLKKFLSYPQARIHYGQLSLGVTQILLGLVSCVLGVCLYFGPWTELCASGCAFWSGSVAILAGVGIVIHEMGQGKLSGHISRLLLLACSATAAAATVMGVKSLIWQTSASYYFEISSTCDSLQPSIVDRFRSVRFTDDSDWRTERCREYLRMMMNLFLAFCILFTVICILKIVVSVASLGLSLRSMCGRNSQVLNDEETEKKLLGGDSAPASPTKEKIPVTP.

Helical transmembrane passes span 61–81 (LGVTQILLGLVSCVLGVCLYF), 89–109 (ASGCAFWSGSVAILAGVGIVI), 125–145 (LLLACSATAAAATVMGVKSLI), and 197–217 (LFLAFCILFTVICILKIVVSV). The disordered stretch occupies residues 242-263 (KKLLGGDSAPASPTKEKIPVTP). Phosphoserine is present on residues Ser-249 and Ser-253.

This sequence belongs to the TMEM176 family. In terms of tissue distribution, expressed in spleen by a variety of myeloid cells including macrophages and dendritic cells (at protein level). Ubiquitously expressed with higher expression in lymphoid tissues.

It is found in the nucleus membrane. Functionally, required for the development of cerebellar granule cells. May play a role in the process of maturation of dendritic cells. This Rattus norvegicus (Rat) protein is Transmembrane protein 176B (Tmem176b).